A 278-amino-acid chain; its full sequence is Release factor glutamine methyltransferase (278 aa).

S-adenosyl-L-methionine contacts are provided by residues 120-124 (GTGTG), aspartate 143, and asparagine 184. 184–187 (NPPY) is a substrate binding site.

This sequence belongs to the protein N5-glutamine methyltransferase family. PrmC subfamily.

It catalyses the reaction L-glutaminyl-[peptide chain release factor] + S-adenosyl-L-methionine = N(5)-methyl-L-glutaminyl-[peptide chain release factor] + S-adenosyl-L-homocysteine + H(+). Functionally, methylates the class 1 translation termination release factors RF1/PrfA and RF2/PrfB on the glutamine residue of the universally conserved GGQ motif. This Deinococcus radiodurans (strain ATCC 13939 / DSM 20539 / JCM 16871 / CCUG 27074 / LMG 4051 / NBRC 15346 / NCIMB 9279 / VKM B-1422 / R1) protein is Release factor glutamine methyltransferase.